The sequence spans 53 residues: U1-poneritoxin-Dq5a (53 aa).

A signal peptide spans 1–23; the sequence is MNIRLMFTLIALLVLTVSFSGAN. Intrachain disulfides connect C25/C42, C32/C47, and C41/C52.

As to expression, expressed by the venom gland.

Its subcellular location is the secreted. Functionally, may have neurotoxic activity. The sequence is that of U1-poneritoxin-Dq5a from Dinoponera quadriceps (South American ant).